We begin with the raw amino-acid sequence, 444 residues long: Putative dipeptidase CPC735_015490 (444 aa).

Positions 1–34 (MSQRTEHNGSWLRNAGSLLSVLACVAVLASPASA) are cleaved as a signal peptide. Zn(2+)-binding residues include H67, D69, and E178. An intrachain disulfide couples C118 to C207. H205 is a substrate binding site. Positions 250 and 271 each coordinate Zn(2+). R282 and D342 together coordinate substrate. N413 carries an N-linked (GlcNAc...) asparagine glycan.

This sequence belongs to the metallo-dependent hydrolases superfamily. Peptidase M19 family. Zn(2+) serves as cofactor.

It carries out the reaction an L-aminoacyl-L-amino acid + H2O = 2 an L-alpha-amino acid. Its function is as follows. Hydrolyzes a wide range of dipeptides. In Coccidioides posadasii (strain C735) (Valley fever fungus), this protein is Putative dipeptidase CPC735_015490.